Consider the following 509-residue polypeptide: Photosystem II CP47 reaction center protein (509 aa).

6 helical membrane-spanning segments follow: residues 21 to 36, 101 to 115, 140 to 156, 203 to 218, 237 to 252, and 457 to 472; these read AVHL…WAGS, IVLS…IWHW, GIHL…FGAF, IAAG…FHLT, VLSS…AFIT, and NFAL…HGSR.

It belongs to the PsbB/PsbC family. PsbB subfamily. As to quaternary structure, PSII is composed of 1 copy each of membrane proteins PsbA, PsbB, PsbC, PsbD, PsbE, PsbF, PsbH, PsbI, PsbJ, PsbK, PsbL, PsbM, PsbT, PsbX, PsbY, PsbZ, Psb30/Ycf12, at least 3 peripheral proteins of the oxygen-evolving complex and a large number of cofactors. It forms dimeric complexes. The cofactor is Binds multiple chlorophylls. PSII binds additional chlorophylls, carotenoids and specific lipids..

It is found in the plastid. Its subcellular location is the chloroplast thylakoid membrane. Its function is as follows. One of the components of the core complex of photosystem II (PSII). It binds chlorophyll and helps catalyze the primary light-induced photochemical processes of PSII. PSII is a light-driven water:plastoquinone oxidoreductase, using light energy to abstract electrons from H(2)O, generating O(2) and a proton gradient subsequently used for ATP formation. In Porphyra purpurea (Red seaweed), this protein is Photosystem II CP47 reaction center protein.